The chain runs to 476 residues: Adenosylhomocysteinase (476 aa).

Substrate is bound by residues Thr-62, Asp-141, and Glu-201. 202-204 (TTT) serves as a coordination point for NAD(+). Positions 231 and 235 each coordinate substrate. Residues Asn-236, 265 to 270 (GYGDVG), Glu-288, Asn-323, 344 to 346 (IGH), and Asn-389 contribute to the NAD(+) site.

The protein belongs to the adenosylhomocysteinase family. NAD(+) serves as cofactor.

Its subcellular location is the cytoplasm. The catalysed reaction is S-adenosyl-L-homocysteine + H2O = L-homocysteine + adenosine. Its pathway is amino-acid biosynthesis; L-homocysteine biosynthesis; L-homocysteine from S-adenosyl-L-homocysteine: step 1/1. Functionally, may play a key role in the regulation of the intracellular concentration of adenosylhomocysteine. The sequence is that of Adenosylhomocysteinase from Delftia acidovorans (strain DSM 14801 / SPH-1).